The sequence spans 174 residues: NADH-ubiquinone oxidoreductase chain 6 (174 aa).

The next 5 helical transmembrane spans lie at 1-21 (MTYV…GFSS), 24-44 (SPIY…AIIL), 47-67 (GGGY…MVVF), 86-106 (VEVL…VLWV), and 151-171 (WLVV…IEIA).

It belongs to the complex I subunit 6 family. As to quaternary structure, core subunit of respiratory chain NADH dehydrogenase (Complex I) which is composed of 45 different subunits.

The protein localises to the mitochondrion inner membrane. The catalysed reaction is a ubiquinone + NADH + 5 H(+)(in) = a ubiquinol + NAD(+) + 4 H(+)(out). Functionally, core subunit of the mitochondrial membrane respiratory chain NADH dehydrogenase (Complex I) which catalyzes electron transfer from NADH through the respiratory chain, using ubiquinone as an electron acceptor. Essential for the catalytic activity and assembly of complex I. The protein is NADH-ubiquinone oxidoreductase chain 6 (MT-ND6) of Gorilla gorilla gorilla (Western lowland gorilla).